Here is a 370-residue protein sequence, read N- to C-terminus: ATP synthase gamma chain, chloroplastic (370 aa).

The transit peptide at 1 to 55 directs the protein to the chloroplast; it reads MKFFCVAGLLASAAAFQAQPAAFTTYSPAVGGATSNVFSESSSPAHRNRRATIVM. Cys-145 is a catalytic residue.

The protein belongs to the ATPase gamma chain family. F-type ATPases have 2 components, CF(1) - the catalytic core - and CF(0) - the membrane proton channel. CF(1) has five subunits: alpha(3), beta(3), gamma(1), delta(1), epsilon(1). CF(0) has four main subunits: a, b, b' and c.

The protein resides in the plastid. It is found in the chloroplast thylakoid membrane. Produces ATP from ADP in the presence of a proton gradient across the membrane. The gamma chain is believed to be important in regulating ATPase activity and the flow of protons through the CF(0) complex. This Trieres chinensis (Marine centric diatom) protein is ATP synthase gamma chain, chloroplastic (ATPC).